The sequence spans 288 residues: ATP synthase gamma chain 1 (288 aa).

This sequence belongs to the ATPase gamma chain family. In terms of assembly, F-type ATPases have 2 components, CF(1) - the catalytic core - and CF(0) - the membrane proton channel. CF(1) has five subunits: alpha(3), beta(3), gamma(1), delta(1), epsilon(1). CF(0) has three main subunits: a, b and c.

The protein localises to the cell inner membrane. In terms of biological role, produces ATP from ADP in the presence of a proton gradient across the membrane. The gamma chain is believed to be important in regulating ATPase activity and the flow of protons through the CF(0) complex. The protein is ATP synthase gamma chain 1 of Photobacterium profundum (strain SS9).